The sequence spans 299 residues: ATP phosphoribosyltransferase (299 aa).

The protein belongs to the ATP phosphoribosyltransferase family. Long subfamily. Mg(2+) is required as a cofactor.

The protein resides in the cytoplasm. The enzyme catalyses 1-(5-phospho-beta-D-ribosyl)-ATP + diphosphate = 5-phospho-alpha-D-ribose 1-diphosphate + ATP. Its pathway is amino-acid biosynthesis; L-histidine biosynthesis; L-histidine from 5-phospho-alpha-D-ribose 1-diphosphate: step 1/9. Its activity is regulated as follows. Feedback inhibited by histidine. In terms of biological role, catalyzes the condensation of ATP and 5-phosphoribose 1-diphosphate to form N'-(5'-phosphoribosyl)-ATP (PR-ATP). Has a crucial role in the pathway because the rate of histidine biosynthesis seems to be controlled primarily by regulation of HisG enzymatic activity. This is ATP phosphoribosyltransferase from Shewanella denitrificans (strain OS217 / ATCC BAA-1090 / DSM 15013).